Here is a 124-residue protein sequence, read N- to C-terminus: Prefoldin subunit beta (124 aa).

The protein belongs to the prefoldin subunit beta family. As to quaternary structure, heterohexamer of two alpha and four beta subunits.

The protein resides in the cytoplasm. Its function is as follows. Molecular chaperone capable of stabilizing a range of proteins. Seems to fulfill an ATP-independent, HSP70-like function in archaeal de novo protein folding. This is Prefoldin subunit beta (pfdB) from Thermoplasma acidophilum (strain ATCC 25905 / DSM 1728 / JCM 9062 / NBRC 15155 / AMRC-C165).